The primary structure comprises 381 residues: GDSL esterase/lipase At3g48460 (381 aa).

Residues 1 to 26 form the signal peptide; it reads MSSSISPLLTTAISVAILLFSTISTA. Ser45 serves as the catalytic Nucleophile. N-linked (GlcNAc...) asparagine glycosylation is found at Asn112, Asn140, and Asn258. Catalysis depends on residues Asp344 and His347.

Belongs to the 'GDSL' lipolytic enzyme family.

Its subcellular location is the secreted. The sequence is that of GDSL esterase/lipase At3g48460 from Arabidopsis thaliana (Mouse-ear cress).